Reading from the N-terminus, the 100-residue chain is Protein RnfH (100 aa).

It belongs to the UPF0125 (RnfH) family.

The polypeptide is Protein RnfH (Actinobacillus succinogenes (strain ATCC 55618 / DSM 22257 / CCUG 43843 / 130Z)).